We begin with the raw amino-acid sequence, 492 residues long: Bifunctional purine biosynthesis protein PurH (492 aa).

The MGS-like domain maps to 1–144 (MKKAILSVSN…KNFKHVTTIV (144 aa)).

Belongs to the PurH family.

The catalysed reaction is (6R)-10-formyltetrahydrofolate + 5-amino-1-(5-phospho-beta-D-ribosyl)imidazole-4-carboxamide = 5-formamido-1-(5-phospho-D-ribosyl)imidazole-4-carboxamide + (6S)-5,6,7,8-tetrahydrofolate. It carries out the reaction IMP + H2O = 5-formamido-1-(5-phospho-D-ribosyl)imidazole-4-carboxamide. The protein operates within purine metabolism; IMP biosynthesis via de novo pathway; 5-formamido-1-(5-phospho-D-ribosyl)imidazole-4-carboxamide from 5-amino-1-(5-phospho-D-ribosyl)imidazole-4-carboxamide (10-formyl THF route): step 1/1. It participates in purine metabolism; IMP biosynthesis via de novo pathway; IMP from 5-formamido-1-(5-phospho-D-ribosyl)imidazole-4-carboxamide: step 1/1. The protein is Bifunctional purine biosynthesis protein PurH of Staphylococcus epidermidis (strain ATCC 35984 / DSM 28319 / BCRC 17069 / CCUG 31568 / BM 3577 / RP62A).